The sequence spans 100 residues: uncharacterized protein (100 aa).

The protein belongs to the csb family.

This is an uncharacterized protein from Dictyostelium discoideum (Social amoeba).